The primary structure comprises 442 residues: Histidine--tRNA ligase (442 aa).

The protein belongs to the class-II aminoacyl-tRNA synthetase family. Homodimer.

The protein localises to the cytoplasm. It catalyses the reaction tRNA(His) + L-histidine + ATP = L-histidyl-tRNA(His) + AMP + diphosphate + H(+). The chain is Histidine--tRNA ligase from Helicobacter hepaticus (strain ATCC 51449 / 3B1).